Consider the following 481-residue polypeptide: Alkaline protease secretion protein AprF (481 aa).

The disordered stretch occupies residues 462 to 481; that stretch reads PAPLHTLSKTDTEENRSALN. A compositionally biased stretch (basic and acidic residues) spans 469 to 481; it reads SKTDTEENRSALN.

It belongs to the outer membrane factor (OMF) (TC 1.B.17) family.

It is found in the cell outer membrane. Its function is as follows. Involved in the secretion of alkaline protease. This Pseudomonas aeruginosa (strain ATCC 15692 / DSM 22644 / CIP 104116 / JCM 14847 / LMG 12228 / 1C / PRS 101 / PAO1) protein is Alkaline protease secretion protein AprF (aprF).